The following is a 381-amino-acid chain: Creatine kinase B-type (381 aa).

At serine 4 the chain carries Phosphoserine. The Phosphagen kinase N-terminal domain maps to 11 to 98; that stretch reads KLRFPAEDEF…FDPIIEDRHG (88 aa). Threonine 35 carries the post-translational modification Phosphothreonine. Residue lysine 45 forms a Glycyl lysine isopeptide (Lys-Gly) (interchain with G-Cter in ubiquitin) linkage. Valine 72 is a binding site for creatine. Basic and acidic residues predominate over residues 96 to 110; it reads RHGGYKPSDEHKTDL. Positions 96–123 are disordered; that stretch reads RHGGYKPSDEHKTDLNPDNLQGGDDLDP. Residues lysine 101 and lysine 107 each participate in a glycyl lysine isopeptide (Lys-Gly) (interchain with G-Cter in ubiquitin) cross-link. Residue tyrosine 125 is modified to Phosphotyrosine. The region spanning 125–367 is the Phosphagen kinase C-terminal domain; it reads YVLSSRVRTG…KLLIEMEQRL (243 aa). ATP-binding positions include 128 to 132, arginine 130, arginine 132, and histidine 191; that span reads SSRVR. The internal MTS-like signal stretch occupies residues 130–138; that stretch reads RVRTGRSIR. Serine 199 bears the Phosphoserine mark. Glutamate 232 is a creatine binding site. Arginine 236 contributes to the ATP binding site. The residue at position 269 (tyrosine 269) is a 3'-nitrotyrosine. Serine 285 contributes to the creatine binding site. ATP is bound by residues arginine 292, arginine 320, 320-325, and aspartate 335; that span reads RGTGGV. Threonine 322 is modified (phosphothreonine). Residue lysine 381 forms a Glycyl lysine isopeptide (Lys-Gly) (interchain with G-Cter in ubiquitin) linkage.

The protein belongs to the ATP:guanido phosphotransferase family. In terms of assembly, dimer of identical or non-identical chains, which can be either B (brain type) or M (muscle type). With MM being the major form in skeletal muscle and myocardium, MB existing in myocardium, and BB existing in many tissues, especially brain. Interacts with SLC12A6 (via C-terminus); the interaction may be required for SLC12A6 potassium-chloride cotransport activity. In terms of processing, ubiquitinated by the ECS(ASB9) complex, leading to its degradation by the proteasome.

It is found in the cytoplasm. It localises to the cytosol. Its subcellular location is the mitochondrion. The protein resides in the cell membrane. It catalyses the reaction creatine + ATP = N-phosphocreatine + ADP + H(+). Reversibly catalyzes the transfer of phosphate between ATP and various phosphogens (e.g. creatine phosphate). Creatine kinase isoenzymes play a central role in energy transduction in tissues with large, fluctuating energy demands, such as skeletal muscle, heart, brain and spermatozoa. Acts as a key regulator of adaptive thermogenesis as part of the futile creatine cycle: localizes to the mitochondria of thermogenic fat cells and acts by mediating phosphorylation of creatine to initiate a futile cycle of creatine phosphorylation and dephosphorylation. During the futile creatine cycle, creatine and N-phosphocreatine are in a futile cycle, which dissipates the high energy charge of N-phosphocreatine as heat without performing any mechanical or chemical work. In Canis lupus familiaris (Dog), this protein is Creatine kinase B-type (CKB).